Here is a 515-residue protein sequence, read N- to C-terminus: MTATPKPLVLIILDGFGHSESPDYNAIYAAKKPVWDRLLATQPHGLISGSGMDVGLPDGQMGNSEVGHMNLGAGRVVYQDFTRVTKAIRDGEFFENPVIAGAVDKAVAADKAVHILGLLSPGGVHSHEDHLVAMAQMAARRGAGKIYLHAFLDGRDTPPKSAQPSLERLDATFAGLGKGRIASIIGRYFAMDRDNRWDRVQAAYELIVDGKAEFTADSSVAALEAAYARGESDEFVKATAVVPAGAEAVRVEDGDAVIFMNFRADRARELSRAFVEPAFNEFPRERAPQLAGFVMLTQYAASIPAPCAFPPEPLTNVLGEYLAKHGKTQLRIAETEKYAHVTFFFSGGREEPYEGEERILIPSPKVATYDLQPEMSAPEVTDRIVEAIEQQRYDVIVVNYANGDMVGHTGVFEAAVKAVECLDTCMGRIVEALDKVGGEALITADHGNVEQMEDESTGQAHTAHTCEPVPFVYVGKRKLSIREGGVLADVAPTMLTLMGLEQPAEMTGRSIVTLG.

Mn(2+)-binding residues include aspartate 14 and serine 64. Serine 64 acts as the Phosphoserine intermediate in catalysis. Substrate contacts are provided by residues histidine 125, 155–156, arginine 187, arginine 193, 263–266, and lysine 337; these read RD and RADR. The Mn(2+) site is built by aspartate 404, histidine 408, aspartate 445, histidine 446, and histidine 464.

This sequence belongs to the BPG-independent phosphoglycerate mutase family. As to quaternary structure, monomer. It depends on Mn(2+) as a cofactor.

The catalysed reaction is (2R)-2-phosphoglycerate = (2R)-3-phosphoglycerate. It participates in carbohydrate degradation; glycolysis; pyruvate from D-glyceraldehyde 3-phosphate: step 3/5. Its function is as follows. Catalyzes the interconversion of 2-phosphoglycerate and 3-phosphoglycerate. The protein is 2,3-bisphosphoglycerate-independent phosphoglycerate mutase of Pseudomonas aeruginosa (strain ATCC 15692 / DSM 22644 / CIP 104116 / JCM 14847 / LMG 12228 / 1C / PRS 101 / PAO1).